We begin with the raw amino-acid sequence, 409 residues long: Immediate early response gene 5-like protein (409 aa).

Disordered stretches follow at residues 168-237 (QPPH…PSSS) and 312-335 (GQEE…GGTP). Residues 184 to 195 (QPGPAPLPPPAP) are compositionally biased toward pro residues. Low complexity-rich tracts occupy residues 196-212 (AALC…CSAP) and 220-237 (PPTV…PSSS). Acidic residues predominate over residues 313–324 (QEEEDDEEEDAG).

It belongs to the IER family.

This is Immediate early response gene 5-like protein (Ier5l) from Rattus norvegicus (Rat).